The chain runs to 155 residues: Protein LOL2 (155 aa).

The residue at position 1 (Met1) is an N-acetylmethionine. A disordered region spans residues 1–35; sequence MEEIQQQTQKEEQKHREEEEEEEEGPPPGWESAVL. Putative zinc finger stretches follow at residues 60–90 and 98–128; these read QMVC…VNLV and QVNC…VTDI. Residues 130–155 form a disordered region; that stretch reads ENNKRPPWSEQQGPLKSLSSLRRAEN. Residues 138–149 are compositionally biased toward polar residues; that stretch reads SEQQGPLKSLSS.

It localises to the nucleus. Its function is as follows. Putative zinc finger that may be involved in programmed cell death and defense response. In Arabidopsis thaliana (Mouse-ear cress), this protein is Protein LOL2 (LOL2).